Consider the following 418-residue polypeptide: Serine--tRNA ligase (418 aa).

L-serine is bound at residue 231–233 (TAE). 262-264 (RSE) lines the ATP pocket. Glutamate 285 lines the L-serine pocket. 349–352 (EISS) is a binding site for ATP. Position 385 (serine 385) interacts with L-serine.

This sequence belongs to the class-II aminoacyl-tRNA synthetase family. Type-1 seryl-tRNA synthetase subfamily. Homodimer. The tRNA molecule binds across the dimer.

It is found in the cytoplasm. It catalyses the reaction tRNA(Ser) + L-serine + ATP = L-seryl-tRNA(Ser) + AMP + diphosphate + H(+). The catalysed reaction is tRNA(Sec) + L-serine + ATP = L-seryl-tRNA(Sec) + AMP + diphosphate + H(+). The protein operates within aminoacyl-tRNA biosynthesis; selenocysteinyl-tRNA(Sec) biosynthesis; L-seryl-tRNA(Sec) from L-serine and tRNA(Sec): step 1/1. In terms of biological role, catalyzes the attachment of serine to tRNA(Ser). Is also able to aminoacylate tRNA(Sec) with serine, to form the misacylated tRNA L-seryl-tRNA(Sec), which will be further converted into selenocysteinyl-tRNA(Sec). In Ureaplasma urealyticum serovar 10 (strain ATCC 33699 / Western), this protein is Serine--tRNA ligase.